Here is a 335-residue protein sequence, read N- to C-terminus: Glyceraldehyde-3-phosphate dehydrogenase (335 aa).

NAD(+) is bound by residues 10-11 (RI), aspartate 31, arginine 75, and threonine 122. D-glyceraldehyde 3-phosphate-binding positions include 152 to 154 (SCT) and threonine 183. The Nucleophile role is filled by cysteine 153. Position 184 (asparagine 184) interacts with NAD(+). D-glyceraldehyde 3-phosphate contacts are provided by residues arginine 198, 211-212 (TG), and arginine 234. Residue asparagine 318 participates in NAD(+) binding.

The protein belongs to the glyceraldehyde-3-phosphate dehydrogenase family. As to quaternary structure, homotetramer.

Its subcellular location is the cytoplasm. It catalyses the reaction D-glyceraldehyde 3-phosphate + phosphate + NAD(+) = (2R)-3-phospho-glyceroyl phosphate + NADH + H(+). It functions in the pathway carbohydrate degradation; glycolysis; pyruvate from D-glyceraldehyde 3-phosphate: step 1/5. Catalyzes the oxidative phosphorylation of glyceraldehyde 3-phosphate (G3P) to 1,3-bisphosphoglycerate (BPG) using the cofactor NAD. The first reaction step involves the formation of a hemiacetal intermediate between G3P and a cysteine residue, and this hemiacetal intermediate is then oxidized to a thioester, with concomitant reduction of NAD to NADH. The reduced NADH is then exchanged with the second NAD, and the thioester is attacked by a nucleophilic inorganic phosphate to produce BPG. The polypeptide is Glyceraldehyde-3-phosphate dehydrogenase (gap) (Borreliella burgdorferi (strain ATCC 35210 / DSM 4680 / CIP 102532 / B31) (Borrelia burgdorferi)).